Reading from the N-terminus, the 181-residue chain is Transcription termination/antitermination protein NusG (181 aa).

Residues 130–158 (PGETVRVNDGPFSDFNGIVEEVDYEKNRL) form the KOW domain.

The protein belongs to the NusG family. As to quaternary structure, monomer. Interacts with the transcription termination factor Rho and with RNA polymerase.

In terms of biological role, participates in transcription elongation, termination and antitermination. In the absence of Rho, increases the rate of transcription elongation by the RNA polymerase (RNAP), probably by partially suppressing pausing. In the presence of Rho, modulates most Rho-dependent termination events by interacting with the RNAP to render the complex more susceptible to the termination activity of Rho. May be required to overcome a kinetic limitation of Rho to function at certain terminators. Also involved in ribosomal RNA transcriptional antitermination. This Buchnera aphidicola subsp. Baizongia pistaciae (strain Bp) protein is Transcription termination/antitermination protein NusG.